Reading from the N-terminus, the 101-residue chain is Integration host factor subunit beta (101 aa).

The segment at 57 to 101 (PARAGRNPRTGAHVPVDQKSVPFFKTGKEMRERLNRDHPDPGAAD) is disordered. Over residues 82–101 (TGKEMRERLNRDHPDPGAAD) the composition is skewed to basic and acidic residues.

Belongs to the bacterial histone-like protein family. As to quaternary structure, heterodimer of an alpha and a beta chain.

This protein is one of the two subunits of integration host factor, a specific DNA-binding protein that functions in genetic recombination as well as in transcriptional and translational control. The protein is Integration host factor subunit beta of Bradyrhizobium diazoefficiens (strain JCM 10833 / BCRC 13528 / IAM 13628 / NBRC 14792 / USDA 110).